A 206-amino-acid polypeptide reads, in one-letter code: FMN-dependent NADH:quinone oxidoreductase (206 aa).

FMN-binding positions include 15 to 17 (SVS), 94 to 97 (MYNF), and 138 to 141 (TRGG).

The protein belongs to the azoreductase type 1 family. In terms of assembly, homodimer. FMN serves as cofactor.

It carries out the reaction 2 a quinone + NADH + H(+) = 2 a 1,4-benzosemiquinone + NAD(+). The catalysed reaction is N,N-dimethyl-1,4-phenylenediamine + anthranilate + 2 NAD(+) = 2-(4-dimethylaminophenyl)diazenylbenzoate + 2 NADH + 2 H(+). Its function is as follows. Quinone reductase that provides resistance to thiol-specific stress caused by electrophilic quinones. Also exhibits azoreductase activity. Catalyzes the reductive cleavage of the azo bond in aromatic azo compounds to the corresponding amines. The polypeptide is FMN-dependent NADH:quinone oxidoreductase (Sinorhizobium fredii (strain NBRC 101917 / NGR234)).